We begin with the raw amino-acid sequence, 693 residues long: F-box protein MAX2 (693 aa).

Residues 3 to 50 (STTLSDLPDVILSTISSLVSDSRARNSLSLVSHKFLALERSTRSHLTI) form the F-box domain. 14 LRR repeats span residues 9 to 34 (LPDV…SLVS), 49 to 74 (TIRG…DLSF), 75 to 100 (LSPW…RLKF), 110 to 135 (VYTR…KLLR), 141 to 167 (SQIP…DLSN), 168 to 196 (FYHW…DLLT), 200 to 225 (TEGY…RVAC), 232 to 257 (FEFV…HMVD), 274 to 299 (DSAV…VLDV), 302 to 327 (DVKH…KLGQ), 332 to 356 (CSAT…SIKN), 357 to 382 (SGDL…EIQG), 383 to 409 (CENV…RISC), and 410 to 436 (CKNL…HIDC). The tract at residues 445–465 (EVEGRVETSEADHEEEDDGYE) is disordered. LRR repeat units lie at residues 480–505 (CSTS…SLWI), 508–532 (GEFL…RIKI), 541–565 (RPAE…QLDC), and 608–637 (DRDV…FIHG).

Part of a SCF (SKP1-cullin-F-box) protein ligase complex. Interacts with SKP1A/ASK1. Interacts with CUL1. Interacts with SMXL6, SMXL7 and SMXL8. Interacts with D14. Forms a complex with D14 and SKP1A/ASK1 in presence of strigolactone. As to expression, expressed in the vasculature of growing leaves and roots, rosette axillary bud, flowers, siliques, funiculi and stems.

The protein localises to the nucleus. It participates in protein modification; protein ubiquitination. In terms of biological role, component of SCF(ASK-cullin-F-box) E3 ubiquitin ligase complexes, which may mediate the ubiquitination and subsequent proteasomal degradation of target proteins. Promotes the senescence. Is necessary for responses to strigolactones and karrikins. Contributes to the selective repression of axillary shoots and moderates the branching by regulating negatively the auxin transport in primary stems, in an AXR1-independent manner. Required for the progression of leaf senescence mediated by methyl jasmonate. Required at each node to suppress axillary bud growth. The sequence is that of F-box protein MAX2 from Arabidopsis thaliana (Mouse-ear cress).